Consider the following 194-residue polypeptide: Protein GrpE (194 aa).

It belongs to the GrpE family. As to quaternary structure, homodimer.

It is found in the cytoplasm. Its function is as follows. Participates actively in the response to hyperosmotic and heat shock by preventing the aggregation of stress-denatured proteins, in association with DnaK and GrpE. It is the nucleotide exchange factor for DnaK and may function as a thermosensor. Unfolded proteins bind initially to DnaJ; upon interaction with the DnaJ-bound protein, DnaK hydrolyzes its bound ATP, resulting in the formation of a stable complex. GrpE releases ADP from DnaK; ATP binding to DnaK triggers the release of the substrate protein, thus completing the reaction cycle. Several rounds of ATP-dependent interactions between DnaJ, DnaK and GrpE are required for fully efficient folding. The protein is Protein GrpE of Aliivibrio fischeri (strain ATCC 700601 / ES114) (Vibrio fischeri).